The primary structure comprises 921 residues: Phototropin-1A (921 aa).

Residues 1-11 (MASKGTEGGHG) show a composition bias toward gly residues. 2 disordered regions span residues 1-59 (MASK…SPFL) and 88-118 (TGLPQGVSARPSSGSARTSSEDNPQQQQSAA). Residues 40–51 (SSASSFRTAAAA) are compositionally biased toward low complexity. Over residues 97–117 (RPSSGSARTSSEDNPQQQQSA) the composition is skewed to polar residues. The PAS 1 domain maps to 123–197 (VSEELRAALS…KIRQSLANGS (75 aa)). FMN is bound by residues 172–177 (NCRFLQ), R190, N205, N215, and Q236. An S-4a-FMN cysteine modification is found at C173. The PAC 1 domain occupies 197–251 (SNYCGRILNYKKDGTPFWNLLTIAPIKDEDGRLLKFIGMQVEVSKYTEGKKDTVV). Residues 286-295 (RSLSESSNNT) show a composition bias toward polar residues. Disordered stretches follow at residues 286–347 (RSLS…NRTR) and 364–390 (SVEKNMLKPRDEDPLIDSDDERPESFE). 2 stretches are compositionally biased toward basic and acidic residues: residues 312-321 (PSKRSSESGS) and 364-376 (SVEKNMLKPRDED). Residues 400–473 (RGIDLATTLE…RKIRDAIDNQ (74 aa)) enclose the PAS 2 domain. FMN-binding positions include 449–454 (NCRFLQ), R467, N482, N492, and Q513. Residue C450 is modified to S-4a-FMN cysteine. One can recognise a PAC 2 domain in the interval 474 to 528 (AEVTVQLINYTKSGKKFWNLFHLQPMRDQKGDVQYFIGVQLDGTEHVQDDAAKEG). Residues 594–881 (FRPVKPLGSG…ANEIKGHPFF (288 aa)) enclose the Protein kinase domain. ATP-binding positions include 600–608 (LGSGDTGSV) and K623. D719 serves as the catalytic Proton acceptor.

It belongs to the protein kinase superfamily. Ser/Thr protein kinase family. Homodimer. Requires FMN as cofactor. Post-translationally, autophosphorylated in response to blue light irradiation. 2 molecules of FMN bind covalently to cysteines after exposure to blue light and are reversed in the dark. In terms of tissue distribution, highly expressed in coleoptiles of dark-grown seedlings.

It catalyses the reaction L-seryl-[protein] + ATP = O-phospho-L-seryl-[protein] + ADP + H(+). The catalysed reaction is L-threonyl-[protein] + ATP = O-phospho-L-threonyl-[protein] + ADP + H(+). Protein kinase that acts as a blue light photoreceptor in a signal-transduction pathway for phototropic responses. Regulates a wide range of physiological activities in plants that maximize the efficiency of photosynthesis, such as chloroplast relocations, stomata opening, and leaf expansion. This Oryza sativa subsp. japonica (Rice) protein is Phototropin-1A (PHOT1A).